A 173-amino-acid chain; its full sequence is Cytochrome c-type biogenesis protein CcmE (173 aa).

Residues 1–8 (MNPRRKSR) are Cytoplasmic-facing. A helical; Signal-anchor for type II membrane protein membrane pass occupies residues 9–29 (FKLVIFVVLGIAIASGLMLYA). The Periplasmic portion of the chain corresponds to 30-173 (LRQNIDLFYT…RDRQEKEGAK (144 aa)). Residues His-131 and Tyr-135 each coordinate heme. Residues 139–173 (ELGEKMQKVHKPMGIKAADLKGESERDRQEKEGAK) are disordered. The span at 156-173 (ADLKGESERDRQEKEGAK) shows a compositional bias: basic and acidic residues.

This sequence belongs to the CcmE/CycJ family.

The protein resides in the cell inner membrane. Its function is as follows. Heme chaperone required for the biogenesis of c-type cytochromes. Transiently binds heme delivered by CcmC and transfers the heme to apo-cytochromes in a process facilitated by CcmF and CcmH. In Haemophilus influenzae (strain 86-028NP), this protein is Cytochrome c-type biogenesis protein CcmE.